The sequence spans 1068 residues: tRNA wybutosine-synthesizing protein 4 (1068 aa).

Residues 1–31 (MCPPEQPAKAMAPSKSNQAAKSAVPTKEEKS) form a disordered region. Residues Arg-81, Gly-107, Asp-134, 181–182 (DL), and Glu-208 each bind S-adenosyl-L-methionine. The 149-residue stretch at 876-1024 (ADFPSLSSDF…ALGRDVYGNR (149 aa)) folds into the JmjC domain.

The protein belongs to the methyltransferase superfamily. LCMT family.

It carries out the reaction 7-[(3S)-3-amino-3-carboxypropyl]wyosine(37) in tRNA(Phe) + S-adenosyl-L-methionine = 7-[(3S)-(3-amino-3-methoxycarbonyl)propyl]wyosine(37) in tRNA(Phe) + S-adenosyl-L-homocysteine. The catalysed reaction is 7-[(3S)-(3-amino-3-methoxycarbonyl)propyl]wyosine(37) in tRNA(Phe) + S-adenosyl-L-methionine + CO2 = wybutosine(37) in tRNA(Phe) + S-adenosyl-L-homocysteine + 2 H(+). It participates in tRNA modification; wybutosine-tRNA(Phe) biosynthesis. In terms of biological role, probable S-adenosyl-L-methionine-dependent methyltransferase that acts as a component of the wybutosine biosynthesis pathway. Wybutosine is a hyper modified guanosine with a tricyclic base found at the 3'-position adjacent to the anticodon of eukaryotic phenylalanine tRNA. May methylate the carboxyl group of leucine residues to form alpha-leucine ester residues. The sequence is that of tRNA wybutosine-synthesizing protein 4 (ppm2) from Emericella nidulans (strain FGSC A4 / ATCC 38163 / CBS 112.46 / NRRL 194 / M139) (Aspergillus nidulans).